A 426-amino-acid polypeptide reads, in one-letter code: Pregnancy-specific beta-1-glycoprotein 9 (426 aa).

The N-terminal stretch at 1-34 (MGPLPAPSCTQRITWKGLLLTASLLNFWNPPTTA) is a signal peptide. An Ig-like V-type domain is found at 35-144 (EVTIEAQPPK…IRHFTFTLYL (110 aa)). 2 N-linked (GlcNAc...) asparagine glycosylation sites follow: asparagine 104 and asparagine 111. The Cell attachment site motif lies at 127–129 (RGD). Ig-like C2-type domains follow at residues 147-234 (PKPY…VTLN), 242-326 (PYIT…PVIL), and 335-410 (PRIY…KSMT). 3 disulfide bridges follow: cysteine 169/cysteine 217, cysteine 262/cysteine 310, and cysteine 354/cysteine 394. N-linked (GlcNAc...) asparagine glycans are attached at residues asparagine 199, asparagine 268, asparagine 303, and asparagine 387.

Belongs to the immunoglobulin superfamily. CEA family. Interacts with latency-associated peptide; leading to TGFB1 activation.

It localises to the secreted. In terms of biological role, binds to the small latent transforming growth factor-beta complex, consisting of the N-terminal TGFB1 latency-associated peptide (LAP) and the mature form of TGFB1, thereby leading to the activation of TGFB1. The activation of TGFB1 leads to stimulation of naive CD4(+) T-cells to increase FoxP3 expression and to an increase in the number of FoxP3(+) regulatory T-cells. Induces the differentiation of a suppressive CD4(+)LAP(+)FoxP3(-) T-cell subset. Induces the secretion of TGFB1 in macrophages, but not in activated CD4(+) T-cells. May reduce the expression of several pro-inflammatory cytokines and chemokines by CD4(+) T-cells, including IL2 and IL6. This chain is Pregnancy-specific beta-1-glycoprotein 9 (PSG9), found in Homo sapiens (Human).